The sequence spans 217 residues: Ribonuclease T (217 aa).

The Exonuclease domain maps to 20–195; that stretch reads VVVDVETAGF…YDTEKTAELF (176 aa). Mg(2+) is bound by residues Asp23, Glu25, His182, and Asp187. The active-site Proton donor/acceptor is His182.

The protein belongs to the RNase T family. In terms of assembly, homodimer. Requires Mg(2+) as cofactor.

Its function is as follows. Trims short 3' overhangs of a variety of RNA species, leaving a one or two nucleotide 3' overhang. Responsible for the end-turnover of tRNA: specifically removes the terminal AMP residue from uncharged tRNA (tRNA-C-C-A). Also appears to be involved in tRNA biosynthesis. The sequence is that of Ribonuclease T from Vibrio vulnificus (strain CMCP6).